The sequence spans 575 residues: Probable ferredoxin/ferredoxin--NADP reductase (575 aa).

4Fe-4S ferredoxin-type domains lie at 2–29 (PHVI…PTPD) and 37–66 (EMLY…PNTR). [4Fe-4S] cluster is bound by residues C9, C15, C19, C46, C49, C52, and C56. Residues 115–575 (VAVVGSGPAA…GQPIVLTVPL (461 aa)) form a ferredoxin--NADP reductase region. FAD contacts are provided by A123, E143, L151, and I187. NADP(+) is bound by residues R213, 258 to 261 (NGNV), 302 to 303 (RR), and E314. Residues W456 and 463 to 465 (GFI) contribute to the FAD site. Residue G463 coordinates NADP(+).

It in the C-terminal section; belongs to the ferredoxin--NADP reductase family. Requires [4Fe-4S] cluster as cofactor. FAD is required as a cofactor.

It catalyses the reaction 2 reduced [2Fe-2S]-[ferredoxin] + NADP(+) + H(+) = 2 oxidized [2Fe-2S]-[ferredoxin] + NADPH. In Mycobacterium bovis (strain ATCC BAA-935 / AF2122/97), this protein is Probable ferredoxin/ferredoxin--NADP reductase (fprB).